The following is a 309-amino-acid chain: Methionine synthase (309 aa).

Residues His201, Cys203, Glu224, and Cys285 each coordinate Zn(2+).

It belongs to the archaeal MetE family. Zn(2+) is required as a cofactor.

It functions in the pathway amino-acid biosynthesis; L-methionine biosynthesis via de novo pathway. Is activated by phosphates. Catalyzes the transfer of a methyl group to L-homocysteine resulting in methionine formation. Can use methylcobalamin and methylcobinamide as methyl donors, but methylcobalamin is not considered to be the physiological substrate. It was proposed that, in vivo, a so-far-unidentified enzyme catalyzes methyltransfer from 5-methyltetrahydromethanopterin (5-CH3-H4MPT) to a corrinoid protein, and that the MetE gene product catalyzes the further transfer to L-homocysteine. Is not active with L-cysteine, coenzyme M, coenzyme B, glutathione or dithiothreitol as substrate. The protein is Methionine synthase of Methanothermobacter marburgensis (strain ATCC BAA-927 / DSM 2133 / JCM 14651 / NBRC 100331 / OCM 82 / Marburg) (Methanobacterium thermoautotrophicum).